The following is a 465-amino-acid chain: Cysteine--tRNA ligase (465 aa).

Zn(2+) is bound at residue Cys-27. Residues Pro-29–Asn-39 carry the 'HIGH' region motif. Positions 207, 232, and 236 each coordinate Zn(2+). The short motif at Lys-264 to Ser-268 is the 'KMSKS' region element. An ATP-binding site is contributed by Lys-267.

It belongs to the class-I aminoacyl-tRNA synthetase family. As to quaternary structure, monomer. Zn(2+) is required as a cofactor.

The protein resides in the cytoplasm. The catalysed reaction is tRNA(Cys) + L-cysteine + ATP = L-cysteinyl-tRNA(Cys) + AMP + diphosphate. This Clostridium botulinum (strain 657 / Type Ba4) protein is Cysteine--tRNA ligase.